The following is a 224-amino-acid chain: Cytidylate kinase (224 aa).

ATP is bound at residue 11–19 (GPAGAGKST).

The protein belongs to the cytidylate kinase family. Type 1 subfamily.

It is found in the cytoplasm. The catalysed reaction is CMP + ATP = CDP + ADP. The enzyme catalyses dCMP + ATP = dCDP + ADP. In Lysinibacillus sphaericus (strain C3-41), this protein is Cytidylate kinase.